We begin with the raw amino-acid sequence, 270 residues long: Undecaprenyl-diphosphatase 3 (270 aa).

The next 7 helical transmembrane spans lie at 5–25, 42–62, 89–109, 117–137, 192–212, 220–240, and 250–270; these read YYILKYLILGLFQGLTEPIPI, IEGFSFELLVNSASLLAVLLI, FFFIIYLVIATIPAGVIGVLF, LKGVKMVGISLLITAVGLWII, FSFLLYIPVSLGGLLLSITDI, TLFVPYIVAFIATFIMTYISL, and GNLKYFSFYCIIVGVLTLIFL.

This sequence belongs to the UppP family.

It localises to the cell membrane. The enzyme catalyses di-trans,octa-cis-undecaprenyl diphosphate + H2O = di-trans,octa-cis-undecaprenyl phosphate + phosphate + H(+). Its function is as follows. Catalyzes the dephosphorylation of undecaprenyl diphosphate (UPP). Confers resistance to bacitracin. The protein is Undecaprenyl-diphosphatase 3 of Bacillus anthracis.